Consider the following 228-residue polypeptide: Ribosomal RNA small subunit methyltransferase G (228 aa).

S-adenosyl-L-methionine-binding positions include Gly-70, 121 to 122, and Arg-138; that span reads AE.

It belongs to the methyltransferase superfamily. RNA methyltransferase RsmG family.

Its subcellular location is the cytoplasm. Specifically methylates the N7 position of a guanine in 16S rRNA. The chain is Ribosomal RNA small subunit methyltransferase G from Thermotoga petrophila (strain ATCC BAA-488 / DSM 13995 / JCM 10881 / RKU-1).